Here is a 504-residue protein sequence, read N- to C-terminus: Peroxisomal N(1)-acetyl-spermine/spermidine oxidase (504 aa).

FAD-binding positions include A16, E37, R45, and 61–62; that span reads HW. Substrate-binding residues include H64 and V187. Residue V240 coordinates FAD. Position 313 (N313) interacts with substrate. FAD-binding positions include E465 and 474 to 475; that span reads TT. A Microbody targeting signal motif is present at residues 502-504; it reads PRL.

This sequence belongs to the flavin monoamine oxidase family. Monomer. FAD serves as cofactor. Widely expressed at different developmental stages. Expressed at high level in the liver and the stomach, expressed at lower level in heart, spleen, thymus, small intestine, muscle, pancreas, uterus, and breast and expressed at very low level in brain, kidney, lung, testis, skin, adrenal gland and prostate gland.

It localises to the peroxisome. The protein localises to the cytoplasm. It carries out the reaction N(1)-acetylspermine + O2 + H2O = 3-acetamidopropanal + spermidine + H2O2. It catalyses the reaction N(1)-acetylspermidine + O2 + H2O = 3-acetamidopropanal + putrescine + H2O2. The enzyme catalyses N(1),N(12)-diacetylspermine + O2 + H2O = 3-acetamidopropanal + N(1)-acetylspermidine + H2O2. It participates in amine and polyamine metabolism; spermine metabolism. In terms of biological role, flavoenzyme which catalyzes the oxidation of N(1)-acetylspermine to spermidine and is thus involved in the polyamine back-conversion. Can also oxidize N(1)-acetylspermidine to putrescine. Substrate specificity: N(1)-acetylspermine = N(1)-acetylspermidine &gt; N(1),N(12)-diacylspermine &gt;&gt; spermine. Does not oxidize spermidine. Plays an important role in the regulation of polyamine intracellular concentration and has the potential to act as a determinant of cellular sensitivity to the antitumor polyamine analogs. This Mus musculus (Mouse) protein is Peroxisomal N(1)-acetyl-spermine/spermidine oxidase (Paox).